A 205-amino-acid polypeptide reads, in one-letter code: Large ribosomal subunit protein uL4 (205 aa).

Positions 48–79 (KAQKSRSDVSGGGKKPWKQKGSGHARAGTTRS) are disordered.

This sequence belongs to the universal ribosomal protein uL4 family. In terms of assembly, part of the 50S ribosomal subunit.

Functionally, one of the primary rRNA binding proteins, this protein initially binds near the 5'-end of the 23S rRNA. It is important during the early stages of 50S assembly. It makes multiple contacts with different domains of the 23S rRNA in the assembled 50S subunit and ribosome. Forms part of the polypeptide exit tunnel. This chain is Large ribosomal subunit protein uL4, found in Methylococcus capsulatus (strain ATCC 33009 / NCIMB 11132 / Bath).